Consider the following 765-residue polypeptide: Cullin-5 (765 aa).

In terms of domain architecture, Cullin neddylation spans 696–757 (RELRVQEGIV…NKYMERRADD (62 aa)). A Glycyl lysine isopeptide (Lys-Gly) (interchain with G-Cter in NEDD8) cross-link involves residue Lys709.

The protein belongs to the cullin family. Interacts with rbx-1 and rbx-2. Post-translationally, neddylated; which enhances the ubiquitination activity of SCF-like complex.

It functions in the pathway protein modification; protein ubiquitination. Its function is as follows. Probable core component of cullin-based SCF-like E3 ubiquitin-protein ligase complexes which mediate the ubiquitination and subsequent proteasomal degradation of target proteins. In association with rbx-2 seems to be involved in meiotic cell cycle progression in the germline. Required for phosphorylation of the MAP kinase MPK-1 in the germline. The chain is Cullin-5 (cul-5) from Caenorhabditis elegans.